Here is a 134-residue protein sequence, read N- to C-terminus: Transcription antitermination protein NusB (134 aa).

The protein belongs to the NusB family.

Its function is as follows. Involved in transcription antitermination. Required for transcription of ribosomal RNA (rRNA) genes. Binds specifically to the boxA antiterminator sequence of the ribosomal RNA (rrn) operons. The protein is Transcription antitermination protein NusB of Halothermothrix orenii (strain H 168 / OCM 544 / DSM 9562).